A 130-amino-acid polypeptide reads, in one-letter code: uncharacterized protein (130 aa).

The N-linked (GlcNAc...) asparagine glycan is linked to Asn102. The helical transmembrane segment at Asp110–Leu130 threads the bilayer.

It localises to the membrane. This is an uncharacterized protein from Dictyostelium discoideum (Social amoeba).